A 285-amino-acid chain; its full sequence is ATP synthase subunit a (285 aa).

6 helical membrane-spanning segments follow: residues 41 to 61 (TWHVDTLAWSIGLGLIFLWIF), 102 to 122 (IAPLALTIFVWVFLMNLMDLI), 164 to 184 (LGVFILMVGFAIKIKGIGGFI), 197 to 217 (VFVQILLIPFNLLLELIALVS), 226 to 246 (LFGNLYAGELIFILIGAIGFM), and 252 to 272 (FVWAVFHILVITLQAFLFMML).

It belongs to the ATPase A chain family. As to quaternary structure, F-type ATPases have 2 components, CF(1) - the catalytic core - and CF(0) - the membrane proton channel. CF(1) has five subunits: alpha(3), beta(3), gamma(1), delta(1), epsilon(1). CF(0) has three main subunits: a(1), b(2) and c(9-12). The alpha and beta chains form an alternating ring which encloses part of the gamma chain. CF(1) is attached to CF(0) by a central stalk formed by the gamma and epsilon chains, while a peripheral stalk is formed by the delta and b chains.

The protein resides in the cell inner membrane. Key component of the proton channel; it plays a direct role in the translocation of protons across the membrane. The protein is ATP synthase subunit a of Pseudoalteromonas translucida (strain TAC 125).